The sequence spans 374 residues: Amino acid binding protein (374 aa).

An N-terminal signal peptide occupies residues 1 to 27 (MSKKLFRKGILALAVSSVMGLSTHALA).

It belongs to the leucine-binding protein family.

It localises to the periplasm. Binds primarily proteinogenic amino acids. The sequence is that of Amino acid binding protein from Pseudomonas aeruginosa (strain ATCC 15692 / DSM 22644 / CIP 104116 / JCM 14847 / LMG 12228 / 1C / PRS 101 / PAO1).